The primary structure comprises 69 residues: Parvalbumin beta 3 (69 aa).

Residue A1 is modified to N-acetylalanine. The 36-residue stretch at F24–G59 folds into the EF-hand domain. D37, D39, S41, F43, E45, and E48 together coordinate Ca(2+).

This sequence belongs to the parvalbumin family.

Functionally, in muscle, parvalbumin is thought to be involved in relaxation after contraction. It binds two calcium ions. In Merluccius polli (Benguela hake), this protein is Parvalbumin beta 3.